A 303-amino-acid polypeptide reads, in one-letter code: MTAEHDAAILPKPGGPLAVGKRATPEPGPNDVLIEVKAVALNPCDYYQRDYGMPPVPIYPAVIGGDAAGVVAKLGSSVTGGPVPGPGSRVIAFASSFYQNGSPDHGAFQKYALAQSEAVIPLPDNLSFEEGAVFPLAVLTALTAWTTIGIPLDTRYTPADKQAVLIWGASSSVGSFAVQSAKTLGFTVYATASPKHHELVKKLGADAVFDYKDSDVVSKIVDAVKKDGVYLHTAHCVVDGALQPTLDILKETKGDAFAKVAHSPVLPECHPTLDNTQITFNFPSMDEVVRTRISKLRRAVSRE.

The tract at residues 1–26 (MTAEHDAAILPKPGGPLAVGKRATPE) is disordered. 44-49 (CDYYQR) serves as a coordination point for NADP(+). Residue 136–143 (LAVLTALT) participates in substrate binding. NADP(+) is bound by residues 170–173 (SSSV), 193–196 (SPKH), Tyr-211, and 246–247 (LD). 265–269 (VLPEC) is a binding site for substrate.

The protein belongs to the zinc-containing alcohol dehydrogenase family.

It functions in the pathway secondary metabolite biosynthesis. Trans-enoyl reductase; part of the gene cluster that mediates the biosynthesis of azaterrilone A and other azaphilones, a class of fungal metabolites characterized by a highly oxygenated pyrano-quinone bicyclic core and exhibiting a broad range of bioactivities. The first step of the pathway begins with the non-reducing polyketide synthase tazA that assembles one acetyl-CoA starter unit, five malonyl-CoA units, and catalyzes a series of Claisen condensations, methylation, PT-mediated cyclization, and finally releases the first hexaketide precursor through the R-domain. The tazA product then undergoes reduction on its terminal ketone and the following pyran-ring formation by yet undetermined enzyme(s). Dehydration and enoyl reduction, possibly involving the trans-enoyl reductase tazE leads to the next intermediate. TazD is predicted as an acetyltransferase and might catalyze the acetylation steps leading to the synthesis of azaterrilone A. Azaterrilone A is not the final product of the taz pathway and both the highly reducing polyketide synthase tazB and the dual enzyme tazHJ catalyze late steps of the pathway, leading to the production of the 2 final stereoisomers that contain additional polyketide modification whose structures have still to be determined. The chain is Trans-enoyl reductase tazE from Aspergillus terreus (strain NIH 2624 / FGSC A1156).